The following is a 117-amino-acid chain: Large-conductance mechanosensitive channel (117 aa).

3 helical membrane-spanning segments follow: residues 7–27 (EFALKGNVLDLAVAVVMGAAF), 30–50 (IVTALVSYIIMPLIGLIFGTV), and 64–84 (GMFVQSIIDFIIIAFALFIFV).

Belongs to the MscL family. Homopentamer.

Its subcellular location is the cell membrane. In terms of biological role, channel that opens in response to stretch forces in the membrane lipid bilayer. May participate in the regulation of osmotic pressure changes within the cell. The sequence is that of Large-conductance mechanosensitive channel from Staphylococcus saprophyticus subsp. saprophyticus (strain ATCC 15305 / DSM 20229 / NCIMB 8711 / NCTC 7292 / S-41).